The primary structure comprises 156 residues: Small ribosomal subunit protein uS7 (156 aa).

This sequence belongs to the universal ribosomal protein uS7 family. In terms of assembly, part of the 30S ribosomal subunit. Contacts proteins S9 and S11.

In terms of biological role, one of the primary rRNA binding proteins, it binds directly to 16S rRNA where it nucleates assembly of the head domain of the 30S subunit. Is located at the subunit interface close to the decoding center, probably blocks exit of the E-site tRNA. The sequence is that of Small ribosomal subunit protein uS7 from Ligilactobacillus salivarius (strain UCC118) (Lactobacillus salivarius).